Consider the following 683-residue polypeptide: Cytoskeleton-associated protein 2 (683 aa).

Disordered regions lie at residues 1 to 28 and 153 to 175; these read MSTPAVPQDLQLPPSQRAQSAFKEQRRQ and NSKKKQMTTEKQKQDANMPKKPV. Phosphoserine is present on residues serine 178 and serine 190. 2 disordered regions span residues 214–236 and 336–403; these read KATKPQPVNTSSVTVKSNRSSNM and EKSE…EKPV. Over residues 219–236 the composition is skewed to polar residues; the sequence is QPVNTSSVTVKSNRSSNM. Basic and acidic residues-rich tracts occupy residues 336-345 and 362-376; these read EKSEPVDQRR and ETSEERKARLSEWKA. A Phosphoserine modification is found at serine 534. 2 positions are modified to phosphothreonine: threonine 579 and threonine 582. Residue serine 595 is modified to Phosphoserine. Phosphothreonine occurs at positions 596 and 597. Tyrosine 599 is modified (phosphotyrosine). Serine 602 is modified (phosphoserine).

Belongs to the CKAP2 family. In terms of assembly, associates with alpha- and beta-tubulins. As to expression, abundant in testis, thymus, and in tumor derived cell lines, while barely detectable in liver, prostate, and kidney.

The protein localises to the cytoplasm. Its subcellular location is the cytoskeleton. The protein resides in the spindle. It is found in the spindle pole. Functionally, possesses microtubule stabilizing properties. Involved in regulating aneuploidy, cell cycling, and cell death in a p53/TP53-dependent manner. The sequence is that of Cytoskeleton-associated protein 2 from Homo sapiens (Human).